A 195-amino-acid chain; its full sequence is MRRAKITRETAETQIEVELDLDGTGRYDNRTGVGFFDHMLDQLARHSLIDLTVRAKGDLHIDDHHTVEDTGIAIGQALTQALGDKRGIRRYGSFHLAMDDALVRAALDLSARPYLVWNVDFPAQKIGTFDTELVREFFQALSTHGGITLHVDRIHGLNAHHIAEAAFKAVARAMREAVEPDPRMAGVLPSTKGAL.

This sequence belongs to the imidazoleglycerol-phosphate dehydratase family.

The protein resides in the cytoplasm. It carries out the reaction D-erythro-1-(imidazol-4-yl)glycerol 3-phosphate = 3-(imidazol-4-yl)-2-oxopropyl phosphate + H2O. Its pathway is amino-acid biosynthesis; L-histidine biosynthesis; L-histidine from 5-phospho-alpha-D-ribose 1-diphosphate: step 6/9. The protein is Imidazoleglycerol-phosphate dehydratase of Paracoccus denitrificans (strain Pd 1222).